The following is a 209-amino-acid chain: MNSIKNHLMCEEIHKRFHLHPKVREAMESIEREVFVPAPFKHFAYTLNALSMQAQQYISSPLTVAKMTQYLEIDHVDSVLEIGCGSGYQAAVLSQIFRRVFSVERIESLYLEARLRLKTLGLDNVHVKFADGNKGWEQYAPYDRILFSACAKNIPQALIDQLEEGGILVAPIQENNEQVIKRFVKQNNALRVQKVLEKCSFVPVVDGVQ.

The active site involves serine 59.

Belongs to the methyltransferase superfamily. L-isoaspartyl/D-aspartyl protein methyltransferase family.

It localises to the cytoplasm. It carries out the reaction [protein]-L-isoaspartate + S-adenosyl-L-methionine = [protein]-L-isoaspartate alpha-methyl ester + S-adenosyl-L-homocysteine. Catalyzes the methyl esterification of L-isoaspartyl residues in peptides and proteins that result from spontaneous decomposition of normal L-aspartyl and L-asparaginyl residues. It plays a role in the repair and/or degradation of damaged proteins. This chain is Protein-L-isoaspartate O-methyltransferase, found in Helicobacter pylori (strain P12).